The chain runs to 149 residues: Calmodulin (149 aa).

The residue at position 2 (Ala2) is an N-acetylalanine. 4 EF-hand domains span residues 8 to 43 (EQIAEFKEAFSLFDKDGDGTITTKELGTVMRSLGQN), 44 to 79 (PTEAELQDMINEVDADGNGTIDFPEFLSLMARKMKD), 81 to 116 (DTEEELIEAFKVFDRDGNGLISAAELRHVMTNLGEK), and 117 to 149 (LTDEEVDEMIREADIDGDGHINYEEFVRMMMAK). Positions 21, 23, 25, 27, 32, 57, 59, 61, 63, 68, 94, 96, 98, and 105 each coordinate Ca(2+). N6,N6,N6-trimethyllysine is present on Lys116. Asp130, Asp132, Asp134, His136, and Glu141 together coordinate Ca(2+).

The protein belongs to the calmodulin family.

Functionally, calmodulin mediates the control of a large number of enzymes, ion channels and other proteins by Ca(2+). Among the enzymes to be stimulated by the calmodulin-Ca(2+) complex are a number of protein kinases and phosphatases. The sequence is that of Calmodulin from Tetrahymena pyriformis.